The primary structure comprises 467 residues: Ammonium transporter Rh type C (467 aa).

Residues 1 to 9 (MAWNTNLRW) are Cytoplasmic-facing. The helical transmembrane segment at 10–30 (RLPLLCLVLEVAMVVLFGLFV) threads the bilayer. Over 31 to 61 (RYSPDADSSWSNEKRKGNITSDLENEFYYRY) the chain is Extracellular. Residue Asn-48 is glycosylated (N-linked (GlcNAc...) asparagine). The chain crosses the membrane as a helical span at residues 62 to 82 (PSFQDVHVMVFLGFGFLMTFL). The Cytoplasmic segment spans residues 83-86 (QRYG). The helical transmembrane segment at 87-107 (YCALGFNFLLAALGVQWALLM) threads the bilayer. Over 108 to 131 (QGWFQYTKDRLILLGIKNLIDADS) the chain is Extracellular. 2 helical membrane passes run 132–152 (CVAS…PVQM) and 153–173 (LLMT…LLHV). At 174–179 (LEVKDA) the chain is on the extracellular side. Residues 180-200 (GGSITIHIFGAYFGLTVTWIL) traverse the membrane as a helical segment. The Cytoplasmic segment spans residues 201–219 (YRHNLDHSRERQSSVYHSN). The helical transmembrane segment at 220-240 (LFAMIGTLFLWIYWPSFNSAM) threads the bilayer. Residues 241–251 (SNYGDAQHRAA) lie on the Extracellular side of the membrane. The chain crosses the membrane as a helical span at residues 252-272 (INTYCSLAASVLTSVAMSSVL). The Cytoplasmic portion of the chain corresponds to 273-282 (HKKGKLDMVH). The chain crosses the membrane as a helical span at residues 283 to 303 (IQNATLAGGVGVGTAAEMMLM). A topological domain (extracellular) is located at residue Pro-304. Residues 305–325 (YGALIVGFICGAVSTLGFVYL) traverse the membrane as a helical segment. At 326–343 (TPFLESRLRIQDTCGIHN) the chain is on the cytoplasmic side. Residues 344–364 (LHGIPGLIGAIVGAVTAAYAS) traverse the membrane as a helical segment. Topologically, residues 365–391 (PDGDRGFVYPFGFHNEKDEKVQGRFQA) are extracellular. The chain crosses the membrane as a helical span at residues 392-412 (FGLLLTLAIAMVGGTIMGLIL). The Cytoplasmic segment spans residues 413-467 (KLPFWGQAMDEDCFDDSIYWEMHEEKSSSPEDHTHKPSVPTEPVEQPTSSATLAP). Over residues 436–447 (EEKSSSPEDHTH) the composition is skewed to basic and acidic residues. Positions 436–467 (EEKSSSPEDHTHKPSVPTEPVEQPTSSATLAP) are disordered. The segment covering 458–467 (QPTSSATLAP) has biased composition (polar residues).

The protein belongs to the ammonium transporter (TC 2.A.49) family. Rh subfamily. As to quaternary structure, homotrimer. Post-translationally, N-glycosylated.

It localises to the cell membrane. Its subcellular location is the apical cell membrane. The catalysed reaction is NH4(+)(in) = NH4(+)(out). The enzyme catalyses methylamine(out) = methylamine(in). It carries out the reaction CO2(out) = CO2(in). In terms of biological role, ammonium transporter involved in the maintenance of acid-base homeostasis. Transports ammonium and its related derivative methylammonium across the plasma membrane of epithelial cells likely contributing to renal transepithelial ammonia transport and ammonia metabolism. Postulated to primarily mediate an electroneutral bidirectional transport of NH3 ammonia species according to a mechanism that implies interaction of an NH4(+) ion with acidic residues of the pore entry followed by dissociation of NH4(+) into NH3 and H(+). As a result NH3 transits through the central pore and is protonated on the extracellular side reforming NH4(+). May act as a CO2 channel providing for renal acid secretion. The polypeptide is Ammonium transporter Rh type C (RHCG) (Oryctolagus cuniculus (Rabbit)).